A 102-amino-acid polypeptide reads, in one-letter code: MDVVARLASQRAVVIFSKSTCCMSHAIKRLFYEQGVSPAIVEIDQDMYGKDIEWALARLGCSPTVPAVFVGGKFVGTANTVMTLHLNGSLKILLKEAGALWL.

The Glutaredoxin domain occupies 1–101; the sequence is MDVVARLASQ…ILLKEAGALW (101 aa). Residue Cys-21 participates in [2Fe-2S] cluster binding. Positions 99–102 match the Responsive for interaction with TGA factors motif; that stretch reads ALWL.

Belongs to the glutaredoxin family. CC-type subfamily.

It localises to the cytoplasm. Its subcellular location is the nucleus. Functionally, may only reduce GSH-thiol disulfides, but not protein disulfides. This is Monothiol glutaredoxin-S10 (GRXS10) from Arabidopsis thaliana (Mouse-ear cress).